The sequence spans 243 residues: Benzil reductase ((S)-benzoin forming) (243 aa).

I6, N80, Y147, K151, and T184 together coordinate NADP(+). Y147 functions as the Proton acceptor in the catalytic mechanism.

Belongs to the short-chain dehydrogenases/reductases (SDR) family.

It localises to the cytoplasm. The catalysed reaction is (S)-benzoin + NADP(+) = benzil + NADPH + H(+). Functionally, reduces benzil stereospecifically to (S)-benzoin. The chain is Benzil reductase ((S)-benzoin forming) (yueD) from Bacillus subtilis (strain 168).